Here is a 282-residue protein sequence, read N- to C-terminus: Formate channel FocB (282 aa).

Topologically, residues 1–35 (MRNKLSFDLQLSARKAAIAERIAAHKIARSKVSVF) are cytoplasmic. Residues 36-56 (LMAMSAGVFMAIGFTFYLSVI) traverse the membrane as a helical segment. Topologically, residues 57-68 (ADAPSSQALTHL) are periplasmic. Residues 69-89 (VGGLCFTLGFILLAVCGTSLF) form a helical membrane-spanning segment. Topologically, residues 90 to 112 (TSSVMTVMAKSRGVISWRTWLIN) are cytoplasmic. Residues 113–133 (ALLVACGNLAGIACFSLLIWF) form a helical membrane-spanning segment. Residues 134 to 163 (SGLVMSENAMWGVAVLHCAEGKMHHTFTES) are Periplasmic-facing. A helical membrane pass occupies residues 164–184 (VSLGIMCNLMVCLALWMSYCG). Topologically, residues 185–190 (RSLCDK) are cytoplasmic. A helical transmembrane segment spans residues 191–211 (IVAMILPITLFVASGFEHCIA). At 212–248 (NLFVIPFAIAIRHFAPPPFWQLAHSSADNFPALTVSH) the chain is on the periplasmic side. The chain crosses the membrane as a helical span at residues 249-269 (FITANLLPVMLGNIIGGAVLV). The Cytoplasmic segment spans residues 270-282 (SMCYRAIYLRQEP).

Belongs to the FNT transporter (TC 1.A.16) family.

The protein localises to the cell inner membrane. It catalyses the reaction formate(in) = formate(out). Its activity is regulated as follows. The direction of formate translocation depends on external pH and electron donor source. Its function is as follows. Involved in the bidirectional transport of formate during mixed-acid fermentation. This is Formate channel FocB from Escherichia coli (strain K12).